Reading from the N-terminus, the 506-residue chain is MISAIEPKNLLRPHSQPVVTTSTLQPDDECNIELRIEDTTVDKYPAKQHARRVAAEIHRDRGLVYLMGQKSTLYEDSDQERTFRQRRYFFYMSGVDEPDCDLTYDINADKLTLYVPDFDLKRTIWMGPTLGREEALQRFDIDEVKYQSSLDEDVKQWAQNQGRGSTLYLLHESQKPAEKVPNVFIDSKTLKQAMDTSRAIKDEHEIGLIRRANEVSAAAHIDVLRGIRKMSNERDIEASFLNTSVSLGAHKQAYHIIAASGSNAATLHYSKNNEPLKGRQFVCLDAGAEWNCYASDVTRTFPMTSQWPSAEAKHIYKLVEHMQESCMVRVKEGVRYLDLHILAHRSLIRGFLTLGIFKGGTLEEIQNSGASNLFFPHGLGHHIGLEVHDVSPESIMAQDNGDYSDNVLISPNNLSPCTTSSPTLKSGMVVTIEPGIYFSQIALDNAKPEQVKYVDLELVKTYMPVGGVRIEDDILVTKTGYENLTTAPKGDGMLEIIRQGDGSCNI.

Residues Asp285, Asp296, Glu433, and Glu471 each coordinate Mn(2+).

Belongs to the peptidase M24B family. The cofactor is Mn(2+).

It carries out the reaction Release of any N-terminal amino acid, including proline, that is linked to proline, even from a dipeptide or tripeptide.. Its function is as follows. Catalyzes the removal of a penultimate prolyl residue from the N-termini of peptides. In Blastomyces gilchristii (strain SLH14081) (Blastomyces dermatitidis), this protein is Probable Xaa-Pro aminopeptidase BDBG_08406.